A 65-amino-acid polypeptide reads, in one-letter code: Putative beta-neurotoxin RjAa7 (65 aa).

An LCN-type CS-alpha/beta domain is found at 1-64 (KEGYPVGRDG…VWDSSTNKCG (64 aa)). 4 cysteine pairs are disulfide-bonded: C11–C63, C15–C37, C22–C44, and C26–C46.

The protein belongs to the long (4 C-C) scorpion toxin superfamily. Sodium channel inhibitor family. Beta subfamily. In terms of tissue distribution, expressed by the venom gland.

Its subcellular location is the secreted. Beta toxins bind voltage-independently at site-4 of sodium channels (Nav) and shift the voltage of activation toward more negative potentials thereby affecting sodium channel activation and promoting spontaneous and repetitive firing. The polypeptide is Putative beta-neurotoxin RjAa7 (Rhopalurus junceus (Caribbean blue scorpion)).